Reading from the N-terminus, the 412-residue chain is Lysosomal phospholipase A and acyltransferase (412 aa).

Positions 1–33 (MDRHLCTCRETQLRSGLLLPLFLLMMLADLTLP) are cleaved as a signal peptide. Aspartate 46 lines the substrate pocket. Cysteine 65 and cysteine 89 are oxidised to a cystine. Asparagine 99 carries N-linked (GlcNAc...) asparagine glycosylation. Serine 198 (acyl-ester intermediate) is an active-site residue. Serine 198 is a Zn(2+) binding site. Methionine 199 serves as a coordination point for substrate. N-linked (GlcNAc...) asparagine glycosylation is found at asparagine 273 and asparagine 289. Cysteine 355 lines the Zn(2+) pocket. Residues aspartate 360 and histidine 392 each act as charge relay system in the active site. Histidine 392 is a binding site for Zn(2+). Asparagine 398 carries an N-linked (GlcNAc...) asparagine glycan.

It belongs to the AB hydrolase superfamily. Lipase family. Post-translationally, N-glycosylated. N-glycosylation is important for maturation of the enzyme and normal subcellular location. Detected in blood plasma. Detected in alveolar macrophages (at protein level). Detected in heart, liver, spleen, kidney, thymus, brain and lung.

Its subcellular location is the secreted. The protein localises to the lysosome. It localises to the membrane. It carries out the reaction a 1,2-diacyl-sn-glycero-3-phosphocholine + H2O = a 2-acyl-sn-glycero-3-phosphocholine + a fatty acid + H(+). The catalysed reaction is 1-hexadecanoyl-2-(9Z-octadecenoyl)-sn-glycero-3-phosphocholine + H2O = 2-(9Z-octadecenoyl)-sn-glycero-3-phosphocholine + hexadecanoate + H(+). It catalyses the reaction 1,2-di-(9Z-octadecenoyl)-sn-glycero-3-phosphocholine + H2O = 2-(9Z-octadecenoyl)-sn-glycero-3-phosphocholine + (9Z)-octadecenoate + H(+). The enzyme catalyses 1-hexadecanoyl-2-glutaroyl-sn-glycero-3-phosphocholine + H2O = 2-glutaroyl-sn-glycero-3-phosphocholine + hexadecanoate + H(+). It carries out the reaction 1-hexadecanoyl-2-nonadioyl-sn-glycero-3-phosphocholine + H2O = 2-nonadioyl-sn-glycero-3-phosphocholine + hexadecanoate + H(+). The catalysed reaction is 1-hexadecanoyl-2-(5-oxopentanoyl)-sn-glycero-3-phosphocholine + H2O = 2-(5-oxopentanoyl)-sn-glycero-3-phosphocholine + hexadecanoate + H(+). It catalyses the reaction 1-hexadecanoyl-2-(9-oxononanoyl)-sn-glycero-3-phosphocholine + H2O = 2-(9-oxononanoyl)-sn-glycero-3-phosphocholine + hexadecanoate + H(+). The enzyme catalyses 1,2-dihexadecanoyl-sn-glycero-3-phosphocholine + H2O = 2-hexadecanoyl-sn-glycero-3-phosphocholine + hexadecanoate + H(+). It carries out the reaction a 1,2-diacyl-sn-glycero-3-phosphocholine + H2O = a 1-acyl-sn-glycero-3-phosphocholine + a fatty acid + H(+). The catalysed reaction is 1-hexadecanoyl-2-(9Z-octadecenoyl)-sn-glycero-3-phosphocholine + H2O = 1-hexadecanoyl-sn-glycero-3-phosphocholine + (9Z)-octadecenoate + H(+). It catalyses the reaction 1,2-di-(9Z-octadecenoyl)-sn-glycero-3-phosphocholine + H2O = 1-(9Z-octadecenoyl)-sn-glycero-3-phosphocholine + (9Z)-octadecenoate + H(+). The enzyme catalyses 1,2-dihexadecanoyl-sn-glycero-3-phosphocholine + H2O = 1-hexadecanoyl-sn-glycero-3-phosphocholine + hexadecanoate + H(+). It carries out the reaction a 1-acyl-sn-glycero-3-phosphocholine + H2O = sn-glycerol 3-phosphocholine + a fatty acid + H(+). The catalysed reaction is 1-hexadecanoyl-sn-glycero-3-phosphocholine + H2O = sn-glycerol 3-phosphocholine + hexadecanoate + H(+). It catalyses the reaction N-(acetyl)-sphing-4-enine + a 1,2-diacyl-sn-glycero-3-phosphoethanolamine = 1-O-acyl-N-(acetyl)-sphing-4-enine + a 2-acyl-sn-glycero-3-phosphoethanolamine. The enzyme catalyses 1-hexadecanoyl-2-(9Z-octadecenoyl)-sn-glycero-3-phosphoethanolamine + N-(acetyl)-sphing-4-enine = 2-(9Z-octadecenoyl)-sn-glycero-3-phosphoethanolamine + 1-hexadecanoyl-N-(acetyl)-sphing-4-enine. It carries out the reaction 1-hexadecanoyl-2-(9Z,12Z-octadecadienoyl)-sn-glycero-3-phosphoethanolamine + N-(acetyl)-sphing-4-enine = 2-(9Z,12Z)-octadecadienoyl-sn-glycero-3-phosphoethanolamine + 1-hexadecanoyl-N-(acetyl)-sphing-4-enine. The catalysed reaction is 1-hexadecanoyl-2-(5Z,8Z,11Z,14Z-eicosatetraenoyl)-sn-glycero-3-phosphoethanolamine + N-(acetyl)-sphing-4-enine = 2-(5Z,8Z,11Z,14Z)-eicosatetraenoyl-sn-glycero-3-phosphoethanolamine + 1-hexadecanoyl-N-(acetyl)-sphing-4-enine. It catalyses the reaction N-(acetyl)-sphing-4-enine + a 1,2-diacyl-sn-glycero-3-phosphoethanolamine = 1-O-acyl-N-(acetyl)-sphing-4-enine + a 1-acyl-sn-glycero-3-phosphoethanolamine. The enzyme catalyses 1-hexadecanoyl-2-(9Z-octadecenoyl)-sn-glycero-3-phosphoethanolamine + N-(acetyl)-sphing-4-enine = 1-(9Z-octadecenoyl)-N-(acetyl)-sphing-4-enine + 1-hexadecanoyl-sn-glycero-3-phosphoethanolamine. It carries out the reaction 1-hexadecanoyl-2-(9Z,12Z-octadecadienoyl)-sn-glycero-3-phosphoethanolamine + N-(acetyl)-sphing-4-enine = 1-(9Z,12Z-octadecadienoyl)-N-acetylsphing-4-enine + 1-hexadecanoyl-sn-glycero-3-phosphoethanolamine. The catalysed reaction is 1-hexadecanoyl-2-(5Z,8Z,11Z,14Z-eicosatetraenoyl)-sn-glycero-3-phosphoethanolamine + N-(acetyl)-sphing-4-enine = 1-(5Z,8Z,11Z,14Z)-eicosatetraenoyl-N-(acetyl)-sphing-4-enine + 1-hexadecanoyl-sn-glycero-3-phosphoethanolamine. It catalyses the reaction N-(acetyl)-sphing-4-enine + a 1,2-diacyl-sn-glycero-3-phosphocholine = 1-O-acyl-N-(acetyl)-sphing-4-enine + a 2-acyl-sn-glycero-3-phosphocholine. The enzyme catalyses 1-hexadecanoyl-2-(9Z-octadecenoyl)-sn-glycero-3-phosphocholine + N-(acetyl)-sphing-4-enine = 1-hexadecanoyl-N-(acetyl)-sphing-4-enine + 2-(9Z-octadecenoyl)-sn-glycero-3-phosphocholine. It carries out the reaction 1-hexadecanoyl-2-(9Z,12Z-octadecadienoyl)-sn-glycero-3-phosphocholine + N-(acetyl)-sphing-4-enine = 2-(9Z,12Z-octadecadienoyl)-sn-glycero-3-phosphocholine + 1-hexadecanoyl-N-(acetyl)-sphing-4-enine. The catalysed reaction is 1-hexadecanoyl-2-(5Z,8Z,11Z,14Z-eicosatetraenoyl)-sn-glycero-3-phosphocholine + N-(acetyl)-sphing-4-enine = 1-hexadecanoyl-N-(acetyl)-sphing-4-enine + 2-(5Z,8Z,11Z,14Z)-eicosatetraenoyl-sn-glycero-3-phosphocholine. It catalyses the reaction 1-hexadecanoyl-2-(4Z,7Z,10Z,13Z,16Z,19Z-docosahexaenoyl)-sn-glycero-3-phosphocholine + N-(acetyl)-sphing-4-enine = 2-(4Z,7Z,10Z,13Z,16Z,19Z-docosahexaenoyl)-sn-glycero-3-phosphocholine + 1-hexadecanoyl-N-(acetyl)-sphing-4-enine. The enzyme catalyses 1-hexadecanoyl-2-nonadioyl-sn-glycero-3-phosphocholine + N-(acetyl)-sphing-4-enine = 2-nonadioyl-sn-glycero-3-phosphocholine + 1-hexadecanoyl-N-(acetyl)-sphing-4-enine. It carries out the reaction 1-octadecanoyl-2-(9Z-octadecenoyl)-sn-glycero-3-phosphocholine + N-(acetyl)-sphing-4-enine = 1-octadecanoyl-N-(acetyl)-sphing-4-enine + 2-(9Z-octadecenoyl)-sn-glycero-3-phosphocholine. The catalysed reaction is 1-(9Z)-octadecenoyl-2-octadecanoyl-sn-glycero-3-phosphocholine + N-(acetyl)-sphing-4-enine = 2-octadecanoyl-sn-glycero-3-phosphocholine + 1-(9Z-octadecenoyl)-N-(acetyl)-sphing-4-enine. It catalyses the reaction 1-octadecanoyl-2-(5Z,8Z,11Z,14Z-eicosatetraenoyl)-sn-glycero-3-phosphocholine + N-(acetyl)-sphing-4-enine = 1-octadecanoyl-N-(acetyl)-sphing-4-enine + 2-(5Z,8Z,11Z,14Z)-eicosatetraenoyl-sn-glycero-3-phosphocholine. The enzyme catalyses 1-(9Z-octadecenoyl)-2-hexadecanoyl-sn-glycero-3-phosphocholine + N-(acetyl)-sphing-4-enine = 1-(9Z-octadecenoyl)-N-(acetyl)-sphing-4-enine + 2-hexadecanoyl-sn-glycero-3-phosphocholine. It carries out the reaction N-(acetyl)-sphing-4-enine + a 1,2-diacyl-sn-glycero-3-phosphocholine = 1-O-acyl-N-(acetyl)-sphing-4-enine + a 1-acyl-sn-glycero-3-phosphocholine. The catalysed reaction is 1-hexadecanoyl-2-(9Z-octadecenoyl)-sn-glycero-3-phosphocholine + N-(acetyl)-sphing-4-enine = 1-(9Z-octadecenoyl)-N-(acetyl)-sphing-4-enine + 1-hexadecanoyl-sn-glycero-3-phosphocholine. It catalyses the reaction 1-hexadecanoyl-2-(9Z,12Z-octadecadienoyl)-sn-glycero-3-phosphocholine + N-(acetyl)-sphing-4-enine = 1-(9Z,12Z-octadecadienoyl)-N-acetylsphing-4-enine + 1-hexadecanoyl-sn-glycero-3-phosphocholine. The enzyme catalyses 1-hexadecanoyl-2-(5Z,8Z,11Z,14Z-eicosatetraenoyl)-sn-glycero-3-phosphocholine + N-(acetyl)-sphing-4-enine = 1-(5Z,8Z,11Z,14Z)-eicosatetraenoyl-N-(acetyl)-sphing-4-enine + 1-hexadecanoyl-sn-glycero-3-phosphocholine. It carries out the reaction 1-hexadecanoyl-2-(4Z,7Z,10Z,13Z,16Z,19Z-docosahexaenoyl)-sn-glycero-3-phosphocholine + N-(acetyl)-sphing-4-enine = 1-(4Z,7Z,10Z,13Z,16Z,19Z-docosahexaenoyl)-N-(acetyl)-sphing-4-enine + 1-hexadecanoyl-sn-glycero-3-phosphocholine. The catalysed reaction is 1-octadecanoyl-2-(9Z-octadecenoyl)-sn-glycero-3-phosphocholine + N-(acetyl)-sphing-4-enine = 1-(9Z-octadecenoyl)-N-(acetyl)-sphing-4-enine + 1-octadecanoyl-sn-glycero-3-phosphocholine. It catalyses the reaction 1-octadecanoyl-2-(9Z,12Z)-octadecadienoyl-sn-glycero-3-phosphocholine + N-(acetyl)-sphing-4-enine = 1-(9Z,12Z-octadecadienoyl)-N-acetylsphing-4-enine + 1-octadecanoyl-sn-glycero-3-phosphocholine. The enzyme catalyses 1-(9Z-octadecenoyl)-2-hexadecanoyl-sn-glycero-3-phosphocholine + N-(acetyl)-sphing-4-enine = 1-hexadecanoyl-N-(acetyl)-sphing-4-enine + 1-(9Z-octadecenoyl)-sn-glycero-3-phosphocholine. It carries out the reaction 1-(9Z)-octadecenoyl-2-octadecanoyl-sn-glycero-3-phosphocholine + N-(acetyl)-sphing-4-enine = 1-octadecanoyl-N-(acetyl)-sphing-4-enine + 1-(9Z-octadecenoyl)-sn-glycero-3-phosphocholine. The catalysed reaction is 1,2-di-(9Z-octadecenoyl)-sn-glycero-3-phosphocholine + N-(acetyl)-sphing-4-enine = 1-(9Z-octadecenoyl)-N-(acetyl)-sphing-4-enine + 1-(9Z-octadecenoyl)-sn-glycero-3-phosphocholine. It catalyses the reaction 1-octadecanoyl-2-(5Z,8Z,11Z,14Z-eicosatetraenoyl)-sn-glycero-3-phosphocholine + N-(acetyl)-sphing-4-enine = 1-(5Z,8Z,11Z,14Z)-eicosatetraenoyl-N-(acetyl)-sphing-4-enine + 1-octadecanoyl-sn-glycero-3-phosphocholine. The enzyme catalyses a 1,2-diacyl-sn-glycero-3-phospho-L-serine + N-(acetyl)-sphing-4-enine = a 2-acyl-sn-glycero-3-phospho-L-serine + 1-O-acyl-N-(acetyl)-sphing-4-enine. It carries out the reaction 1-octadecanoyl-2-(9Z-octadecenoyl)-sn-glycero-3-phospho-L-serine + N-(acetyl)-sphing-4-enine = 2-(9Z-octadecenoyl)-sn-glycero-3-phospho-L-serine + 1-octadecanoyl-N-(acetyl)-sphing-4-enine. The catalysed reaction is a 1,2-diacyl-sn-glycero-3-phospho-L-serine + N-(acetyl)-sphing-4-enine = 1-O-acyl-N-(acetyl)-sphing-4-enine + a 1-acyl-sn-glycero-3-phospho-L-serine. It catalyses the reaction 1-octadecanoyl-2-(9Z-octadecenoyl)-sn-glycero-3-phospho-L-serine + N-(acetyl)-sphing-4-enine = 1-octadecanoyl-sn-glycero-3-phosphoserine + 1-(9Z-octadecenoyl)-N-(acetyl)-sphing-4-enine. The enzyme catalyses a 1,2-diacyl-sn-glycero-3-phospho-(1'-sn-glycerol) + N-(acetyl)-sphing-4-enine = 2-acyl-sn-glycero-3-phospho-(1'-sn-glycerol) + 1-O-acyl-N-(acetyl)-sphing-4-enine. It carries out the reaction 1-octadecanoyl-2-(9Z-octadecenoyl)-sn-glycero-3-phospho-(1'-sn-glycerol) + N-(acetyl)-sphing-4-enine = 2-(9Z-octadecenoyl)-sn-glycero-3-phospho-(1'-sn-glycerol) + 1-octadecanoyl-N-(acetyl)-sphing-4-enine. The catalysed reaction is a 1,2-diacyl-sn-glycero-3-phospho-(1'-sn-glycerol) + N-(acetyl)-sphing-4-enine = 1-O-acyl-N-(acetyl)-sphing-4-enine + 1-acyl-sn-glycero-3-phospho-(1'-sn-glycerol). It catalyses the reaction 1-octadecanoyl-2-(9Z-octadecenoyl)-sn-glycero-3-phospho-(1'-sn-glycerol) + N-(acetyl)-sphing-4-enine = 1-octadecanoyl-sn-glycero-3-phospho-(1'-sn-glycerol) + 1-(9Z-octadecenoyl)-N-(acetyl)-sphing-4-enine. The enzyme catalyses an N-acylethanolamine + a 1,2-diacyl-sn-glycero-3-phosphocholine = 2-(acylamino)ethyl fatty acid + a 2-acyl-sn-glycero-3-phosphocholine. It carries out the reaction an N-acylethanolamine + a 1,2-diacyl-sn-glycero-3-phosphocholine = 2-(acylamino)ethyl fatty acid + a 1-acyl-sn-glycero-3-phosphocholine. The catalysed reaction is N-(5Z,8Z,11Z,14Z-eicosatetraenoyl)-ethanolamine + 1,2-di-(9Z-octadecenoyl)-sn-glycero-3-phosphocholine = 2-[(5Z,8Z,11Z,14Z)-eicosatetraenoylamino]ethyl (9Z)-octadecenoate + (9Z-octadecenoyl)-sn-glycero-3-phosphocholine. It catalyses the reaction N-(9Z-octadecenoyl) ethanolamine + 1,2-di-(9Z-octadecenoyl)-sn-glycero-3-phosphocholine = 2-[(9Z)-octadecenoylamino]ethyl (9Z)-octadecenoate + (9Z-octadecenoyl)-sn-glycero-3-phosphocholine. The enzyme catalyses a 3-acyl-sn-glycerol + a 1,2-diacyl-sn-glycero-3-phosphocholine = a 1,3-diacylglycerol + a 1-acyl-sn-glycero-3-phosphocholine. It carries out the reaction a 3-acyl-sn-glycerol + a 1,2-diacyl-sn-glycero-3-phosphocholine = a 1,3-diacylglycerol + a 2-acyl-sn-glycero-3-phosphocholine. The catalysed reaction is 3-(9Z-octadecenoyl)-sn-glycerol + 1,2-di-(9Z-octadecenoyl)-sn-glycero-3-phosphocholine = 1,3-di-(9Z-octadecenoyl)-glycerol + (9Z-octadecenoyl)-sn-glycero-3-phosphocholine. It catalyses the reaction 3-hexadecanoyl-sn-glycerol + 1,2-di-(9Z-octadecenoyl)-sn-glycero-3-phosphocholine = 1-(9Z)-octadecenoyl-3-hexadecanoyl-sn-glycerol + (9Z-octadecenoyl)-sn-glycero-3-phosphocholine. The enzyme catalyses a 1-acyl-sn-glycerol + a 1,2-diacyl-sn-glycero-3-phosphocholine = a 1,3-diacylglycerol + a 2-acyl-sn-glycero-3-phosphocholine. It carries out the reaction a 1-acyl-sn-glycerol + a 1,2-diacyl-sn-glycero-3-phosphocholine = a 1,3-diacylglycerol + a 1-acyl-sn-glycero-3-phosphocholine. The catalysed reaction is 1-(9Z-octadecenoyl)-sn-glycerol + 1,2-di-(9Z-octadecenoyl)-sn-glycero-3-phosphocholine = 1,3-di-(9Z-octadecenoyl)-glycerol + (9Z-octadecenoyl)-sn-glycero-3-phosphocholine. It catalyses the reaction 1-hexadecanoyl-sn-glycerol + 1,2-di-(9Z-octadecenoyl)-sn-glycero-3-phosphocholine = 1-hexadecanoyl-3-(9Z)-octadecenoyl-sn-glycerol + (9Z-octadecenoyl)-sn-glycero-3-phosphocholine. The enzyme catalyses a 2-acylglycerol + a 1,2-diacyl-sn-glycero-3-phosphocholine = a 1,2-diacylglycerol + a 2-acyl-sn-glycero-3-phosphocholine. It carries out the reaction a 2-acylglycerol + a 1,2-diacyl-sn-glycero-3-phosphocholine = a 1,2-diacylglycerol + a 1-acyl-sn-glycero-3-phosphocholine. The catalysed reaction is 2-hexadecanoylglycerol + 1,2-di-(9Z-octadecenoyl)-sn-glycero-3-phosphocholine = 1-(9Z)-octadecenoyl-2-hexadecanoylglycerol + (9Z-octadecenoyl)-sn-glycero-3-phosphocholine. It catalyses the reaction 1-O-alkylglycerol + a 1,2-diacyl-sn-glycero-3-phosphocholine = 1-O-alkyl-3-acylglycerol + a 1-acyl-sn-glycero-3-phosphocholine. The enzyme catalyses 1-O-alkylglycerol + a 1,2-diacyl-sn-glycero-3-phosphocholine = 1-O-alkyl-3-acylglycerol + a 2-acyl-sn-glycero-3-phosphocholine. It carries out the reaction 1-O-hexadecylglycerol + 1,2-di-(9Z-octadecenoyl)-sn-glycero-3-phosphocholine = 1-O-hexadecyl-3-(9Z)-octadecenoylglycerol + (9Z-octadecenoyl)-sn-glycero-3-phosphocholine. The catalysed reaction is 1-O-alkyl-2-acyl-sn-glycerol + a 1,2-diacyl-sn-glycero-3-phosphocholine = 1-O-alkyl-2,3-diacyl-sn-glycerol + a 2-acyl-sn-glycero-3-phosphocholine. It catalyses the reaction 1-O-alkyl-2-acyl-sn-glycerol + a 1,2-diacyl-sn-glycero-3-phosphocholine = 1-O-alkyl-2,3-diacyl-sn-glycerol + a 1-acyl-sn-glycero-3-phosphocholine. The enzyme catalyses 1-O-hexadecyl-2-acetyl-sn-glycerol + 1,2-di-(9Z-octadecenoyl)-sn-glycero-3-phosphocholine = 1-O-hexadecyl-2-acetyl-3-(9Z)-octadecenoyl-sn-glycerol + (9Z-octadecenoyl)-sn-glycero-3-phosphocholine. It carries out the reaction 1-O-hexadecyl-2-O-methyl-sn-glycerol + 1,2-di-(9Z-octadecenoyl)-sn-glycero-3-phosphocholine = 1-O-hexadecyl-2-O-methyl-3-(9Z)-octadecenoyl-sn-glycerol + (9Z-octadecenoyl)-sn-glycero-3-phosphocholine. The catalysed reaction is a 1,2-diacyl-sn-glycero-3-phosphoethanolamine + H2O = a 1-acyl-sn-glycero-3-phosphoethanolamine + a fatty acid + H(+). It catalyses the reaction 1-acyl-2-(5Z,8Z,11Z,14Z)-eicosatetraenoyl-sn-glycero-3-phosphoethanolamine + H2O = a 1-acyl-sn-glycero-3-phosphoethanolamine + (5Z,8Z,11Z,14Z)-eicosatetraenoate + H(+). The enzyme catalyses a 1,2-diacyl-sn-glycero-3-phospho-(1'-sn-glycerol) + H2O = 1-acyl-sn-glycero-3-phospho-(1'-sn-glycerol) + a fatty acid + H(+). It carries out the reaction 1-hexadecanoyl-2-(9Z-octadecenoyl)-sn-glycero-3-phospho-(1'-sn-glycerol) + H2O = 1-hexadecanoyl-sn-glycero-3-phospho-(1'-sn-glycerol) + (9Z)-octadecenoate + H(+). The catalysed reaction is a 1,2-diacyl-sn-glycero-3-phospho-(1'-sn-glycerol) + H2O = 2-acyl-sn-glycero-3-phospho-(1'-sn-glycerol) + a fatty acid + H(+). It catalyses the reaction 1-hexadecanoyl-2-(9Z-octadecenoyl)-sn-glycero-3-phospho-(1'-sn-glycerol) + H2O = 2-(9Z-octadecenoyl)-sn-glycero-3-phospho-(1'-sn-glycerol) + hexadecanoate + H(+). Its activity is regulated as follows. Phospholipase sn-2 versus sn-1 positional specificity is affected by the phospholipid composition of membranes. Phospholipase A2 activity toward 1-hexadecanoyl-2-(5Z,8Z,11Z,14Z-eicosatetraenoyl)-sn-glycero-3-phosphocholine (PAPE) is enhanced in the presence of 1,2-dioleoyl-sn-glycero-3-phosphocholine (DOPC), which promotes lipid bilayer formation. O-acyltransferase activity is inhibited by antiarrhythmic drug amiodarone. In terms of biological role, has dual calcium-independent phospholipase and O-acyltransferase activities with a potential role in glycerophospholipid homeostasis and remodeling of acyl groups of lipophilic alcohols present in acidic cellular compartments. Catalyzes hydrolysis of the ester bond of the fatty acyl group attached at sn-1 or sn-2 position of phospholipids (phospholipase A1 or A2 activity) and transfer it to the hydroxyl group at the first carbon of lipophilic alcohols (O-acyltransferase activity). Among preferred fatty acyl donors are phosphatidylcholines, phosphatidylethanolamines, phosphatidylglycerols and phosphatidylserines. Favors sn-2 over sn-1 deacylation of unsaturated fatty acyl groups of phosphatidylcholines, phosphatidylethanolamines, and phosphatidylglycerols. Among preferred fatty acyl acceptors are natural lipophilic alcohols including short-chain ceramide N-acetyl-sphingosine (C2 ceramide), alkylacylglycerols, monoacylglycerols, and acylethanolamides such as anandamide and oleoylethanolamide. Selectively hydrolyzes the sn-1 fatty acyl group of truncated oxidized phospholipids and may play a role in detoxification of reactive oxidized phospholipids during oxidative stress. Required for normal phospholipid degradation in alveolar macrophages with potential implications in the clearance of pulmonary surfactant, which is mainly composed of dipalmitoylphosphatidylcholine (1,2-dihexadecanoyl-sn-glycero-3-phosphocholine). Involved in the first step of bis(monoacylglycero)phosphate (BMP) de novo synthesis from phosphatidylglycerol (1,2-diacyl-sn-glycero-3-phospho-(1'-sn-glycerol), PG). BMP is an important player in cargo sorting and degradation, regulation of cellular cholesterol levels and intercellular communication. At neutral pH, hydrolyzes the sn-1 fatty acyl group of the lysophosphatidylcholines. The sequence is that of Lysosomal phospholipase A and acyltransferase from Mus musculus (Mouse).